The sequence spans 398 residues: 4-hydroxy-3-methylbut-2-en-1-yl diphosphate synthase (ferredoxin) (398 aa).

Positions 306, 309, 340, and 347 each coordinate [4Fe-4S] cluster.

The protein belongs to the IspG family. Requires [4Fe-4S] cluster as cofactor.

The enzyme catalyses (2E)-4-hydroxy-3-methylbut-2-enyl diphosphate + 2 oxidized [2Fe-2S]-[ferredoxin] + H2O = 2-C-methyl-D-erythritol 2,4-cyclic diphosphate + 2 reduced [2Fe-2S]-[ferredoxin] + H(+). It participates in isoprenoid biosynthesis; isopentenyl diphosphate biosynthesis via DXP pathway; isopentenyl diphosphate from 1-deoxy-D-xylulose 5-phosphate: step 5/6. In terms of biological role, converts 2C-methyl-D-erythritol 2,4-cyclodiphosphate (ME-2,4cPP) into 1-hydroxy-2-methyl-2-(E)-butenyl 4-diphosphate. The chain is 4-hydroxy-3-methylbut-2-en-1-yl diphosphate synthase (ferredoxin) from Synechococcus sp. (strain CC9311).